Here is a 907-residue protein sequence, read N- to C-terminus: Protein translocase subunit SecA (907 aa).

ATP-binding positions include Q87, G105–T109, and D512. A disordered region spans residues A869–R897. Residues V878–R887 are compositionally biased toward basic and acidic residues. The Zn(2+) site is built by C891, C893, C902, and H903.

It belongs to the SecA family. Monomer and homodimer. Part of the essential Sec protein translocation apparatus which comprises SecA, SecYEG and auxiliary proteins SecDF-YajC and YidC. The cofactor is Zn(2+).

It localises to the cell inner membrane. Its subcellular location is the cytoplasm. It catalyses the reaction ATP + H2O + cellular proteinSide 1 = ADP + phosphate + cellular proteinSide 2.. Part of the Sec protein translocase complex. Interacts with the SecYEG preprotein conducting channel. Has a central role in coupling the hydrolysis of ATP to the transfer of proteins into and across the cell membrane, serving both as a receptor for the preprotein-SecB complex and as an ATP-driven molecular motor driving the stepwise translocation of polypeptide chains across the membrane. In Shewanella sediminis (strain HAW-EB3), this protein is Protein translocase subunit SecA.